Reading from the N-terminus, the 320-residue chain is o-succinylbenzoate synthase (320 aa).

Catalysis depends on Lys133, which acts as the Proton donor. Asp161, Glu190, and Asp213 together coordinate Mg(2+). Residue Lys235 is the Proton acceptor of the active site.

Belongs to the mandelate racemase/muconate lactonizing enzyme family. MenC type 1 subfamily. A divalent metal cation serves as cofactor.

The catalysed reaction is (1R,6R)-6-hydroxy-2-succinyl-cyclohexa-2,4-diene-1-carboxylate = 2-succinylbenzoate + H2O. It participates in quinol/quinone metabolism; 1,4-dihydroxy-2-naphthoate biosynthesis; 1,4-dihydroxy-2-naphthoate from chorismate: step 4/7. Its pathway is quinol/quinone metabolism; menaquinone biosynthesis. Its function is as follows. Converts 2-succinyl-6-hydroxy-2,4-cyclohexadiene-1-carboxylate (SHCHC) to 2-succinylbenzoate (OSB). This is o-succinylbenzoate synthase from Shigella boydii serotype 4 (strain Sb227).